A 205-amino-acid polypeptide reads, in one-letter code: Recombination protein RecR (205 aa).

The segment at 58–75 (CSECQNVTDRDSDPCVLC) adopts a C4-type zinc-finger fold. The Toprim domain maps to 83 to 182 (TVICVVESPV…AVSKIARGIP (100 aa)).

It belongs to the RecR family.

May play a role in DNA repair. It seems to be involved in an RecBC-independent recombinational process of DNA repair. It may act with RecF and RecO. This is Recombination protein RecR from Chlorobium phaeobacteroides (strain DSM 266 / SMG 266 / 2430).